A 469-amino-acid polypeptide reads, in one-letter code: Chromosomal replication initiator protein DnaA (469 aa).

A domain I, interacts with DnaA modulators region spans residues 1–71 (MKEFWQTCVS…EALAAEWYQR (71 aa)). Positions 71 to 131 (RPVQVTFELP…DAANIVYERS (61 aa)) are domain II. The domain III, AAA+ region stretch occupies residues 132-348 (RLNTDLTFEN…GALRKVLAYA (217 aa)). 4 residues coordinate ATP: glycine 176, glycine 178, lysine 179, and threonine 180. The domain IV, binds dsDNA stretch occupies residues 349-469 (RFHGRDVLTV…LHVLEQTLKG (121 aa)).

Belongs to the DnaA family. As to quaternary structure, oligomerizes as a right-handed, spiral filament on DNA at oriC.

The protein localises to the cytoplasm. Plays an essential role in the initiation and regulation of chromosomal replication. ATP-DnaA binds to the origin of replication (oriC) to initiate formation of the DNA replication initiation complex once per cell cycle. Binds the DnaA box (a 9 base pair repeat at the origin) and separates the double-stranded (ds)DNA. Forms a right-handed helical filament on oriC DNA; dsDNA binds to the exterior of the filament while single-stranded (ss)DNA is stabiized in the filament's interior. The ATP-DnaA-oriC complex binds and stabilizes one strand of the AT-rich DNA unwinding element (DUE), permitting loading of DNA polymerase. After initiation quickly degrades to an ADP-DnaA complex that is not apt for DNA replication. Binds acidic phospholipids. This Bordetella parapertussis (strain 12822 / ATCC BAA-587 / NCTC 13253) protein is Chromosomal replication initiator protein DnaA.